The primary structure comprises 679 residues: UvrABC system protein C (679 aa).

The region spanning 65–143 (NSPGVYRMLN…IKRLRPRFNV (79 aa)) is the GIY-YIG domain. The UVR domain occupies 253 to 288 (QKVKSHMAEAMNQAAEDLDFERAAIYRDRLAALSHV).

This sequence belongs to the UvrC family. In terms of assembly, interacts with UvrB in an incision complex.

The protein resides in the cytoplasm. The UvrABC repair system catalyzes the recognition and processing of DNA lesions. UvrC both incises the 5' and 3' sides of the lesion. The N-terminal half is responsible for the 3' incision and the C-terminal half is responsible for the 5' incision. The polypeptide is UvrABC system protein C (Rhizobium etli (strain ATCC 51251 / DSM 11541 / JCM 21823 / NBRC 15573 / CFN 42)).